A 275-amino-acid chain; its full sequence is MEPSLLMWRFFVFIVVPGCVTEACHDDPPSLRNAMFKVFRYEVGTMINCDCKTGFRRVSAVMRCVGDSSHSAWENRCFCNSTSPAKNQVKQVTPAPEEHREKKHTDAQNQTQPPEEADLPGHCEEPPPWEHEREPLKRVYHFTLGQTVHYQCAQGFRALQTSPAESTCMMINGELRWTRPRLKCIREGEHGQASDDAEPQESTEAPPGSGTFLPTRMAGTTNFQKPTDEIATLDTFIFTTEYQIAVAGCTLLLASILLLSCLTWQRKWKKNRRTI.

Positions 1–21 (MEPSLLMWRFFVFIVVPGCVT) are cleaved as a signal peptide. The region spanning 22–81 (EACHDDPPSLRNAMFKVFRYEVGTMINCDCKTGFRRVSAVMRCVGDSSHSAWENRCFCNS) is the Sushi 1 domain. Over 22–243 (EACHDDPPSL…DTFIFTTEYQ (222 aa)) the chain is Extracellular. Intrachain disulfides connect Cys-24–Cys-64, Cys-49–Cys-77, and Cys-51–Cys-79. Residue Asn-80 is glycosylated (N-linked (GlcNAc...) asparagine). The interval 88–130 (QVKQVTPAPEEHREKKHTDAQNQTQPPEEADLPGHCEEPPPWE) is disordered. A compositionally biased stretch (basic and acidic residues) spans 96-106 (PEEHREKKHTD). An N-linked (GlcNAc...) asparagine glycan is attached at Asn-109. A compositionally biased stretch (basic and acidic residues) spans 119–130 (LPGHCEEPPPWE). Residues 121–186 (GHCEEPPPWE…WTRPRLKCIR (66 aa)) enclose the Sushi 2 domain. Intrachain disulfides connect Cys-123–Cys-168 and Cys-152–Cys-184. The disordered stretch occupies residues 188 to 221 (GEHGQASDDAEPQESTEAPPGSGTFLPTRMAGTT). Residues 244–262 (IAVAGCTLLLASILLLSCL) form a helical membrane-spanning segment. Residues 263 to 275 (TWQRKWKKNRRTI) lie on the Cytoplasmic side of the membrane.

In terms of assembly, non-covalent dimer of an alpha and a beta subunit. IL2R exists in 3 different forms: a high affinity dimer, an intermediate affinity monomer (beta subunit), and a low affinity monomer (alpha subunit). The high and intermediate affinity forms also associate with a gamma subunit.

It localises to the membrane. Receptor for interleukin-2. The receptor is involved in the regulation of immune tolerance by controlling regulatory T cells (TREGs) activity. TREGs suppress the activation and expansion of autoreactive T-cells. The sequence is that of Interleukin-2 receptor subunit alpha (IL2RA) from Bos taurus (Bovine).